Consider the following 691-residue polypeptide: Alpha-1,4-glucan:maltose-1-phosphate maltosyltransferase (691 aa).

Alpha-maltose 1-phosphate-binding residues include K280, Q341, and D376. The Nucleophile role is filled by D411. N412 contributes to the alpha-maltose 1-phosphate binding site. Catalysis depends on E440, which acts as the Proton donor. An alpha-maltose 1-phosphate-binding site is contributed by 550-551 (KY).

The protein belongs to the glycosyl hydrolase 13 family. GlgE subfamily. In terms of assembly, homodimer.

It carries out the reaction alpha-maltose 1-phosphate + [(1-&gt;4)-alpha-D-glucosyl](n) = [(1-&gt;4)-alpha-D-glucosyl](n+2) + phosphate. Maltosyltransferase that uses maltose 1-phosphate (M1P) as the sugar donor to elongate linear or branched alpha-(1-&gt;4)-glucans. Is involved in a branched alpha-glucan biosynthetic pathway from trehalose, together with TreS, Mak and GlgB. The sequence is that of Alpha-1,4-glucan:maltose-1-phosphate maltosyltransferase from Arcanobacterium haemolyticum (strain ATCC 9345 / DSM 20595 / CCM 5947 / CCUG 17215 / LMG 16163 / NBRC 15585 / NCTC 8452 / 11018).